The primary structure comprises 240 residues: tRNA (guanine-N(7)-)-methyltransferase (240 aa).

S-adenosyl-L-methionine is bound by residues glutamate 70, glutamate 95, aspartate 122, and aspartate 145. The active site involves aspartate 145. Substrate-binding positions include lysine 149, aspartate 181, and 218–221 (TKFE).

This sequence belongs to the class I-like SAM-binding methyltransferase superfamily. TrmB family.

It carries out the reaction guanosine(46) in tRNA + S-adenosyl-L-methionine = N(7)-methylguanosine(46) in tRNA + S-adenosyl-L-homocysteine. It functions in the pathway tRNA modification; N(7)-methylguanine-tRNA biosynthesis. Catalyzes the formation of N(7)-methylguanine at position 46 (m7G46) in tRNA. This Pseudomonas entomophila (strain L48) protein is tRNA (guanine-N(7)-)-methyltransferase.